Reading from the N-terminus, the 311-residue chain is Protoheme IX farnesyltransferase (311 aa).

Helical transmembrane passes span 39 to 59 (LLAM…PIGE), 61 to 81 (LPEI…AGAF), 111 to 131 (ALVL…VASP), 133 to 153 (AALF…MWSK), 162 to 182 (IGSV…SGDL), 187 to 207 (IIGL…AIAI), 246 to 266 (FFFV…SLIW), and 287 to 307 (FVFS…FSLL).

The protein belongs to the UbiA prenyltransferase family. Protoheme IX farnesyltransferase subfamily. As to quaternary structure, interacts with CtaA.

It is found in the cell membrane. The enzyme catalyses heme b + (2E,6E)-farnesyl diphosphate + H2O = Fe(II)-heme o + diphosphate. It participates in porphyrin-containing compound metabolism; heme O biosynthesis; heme O from protoheme: step 1/1. Converts heme B (protoheme IX) to heme O by substitution of the vinyl group on carbon 2 of heme B porphyrin ring with a hydroxyethyl farnesyl side group. The polypeptide is Protoheme IX farnesyltransferase (Shouchella clausii (strain KSM-K16) (Alkalihalobacillus clausii)).